We begin with the raw amino-acid sequence, 227 residues long: Cytosolic-abundant heat soluble protein 106094 (227 aa).

The tract at residues 1 to 28 (MEAMNMNIPRDAMFVPPPESEQNGYHEK) is disordered. The stretch at 90–140 (VEEARRDYAAKTRENEMLGQQYEKELERKSEAYRKHQEVEADKIRKELEKQ) forms a coiled coil. 2 CAHS motif regions span residues 122-140 (YRKHQEVEADKIRKELEKQ) and 159-177 (QKRMIDLECRYAKKDMDRE). A disordered region spans residues 198 to 227 (LDSSAAGTESGGHVVSQSEKFTERNREMKR). Positions 217–227 (KFTERNREMKR) are enriched in basic and acidic residues.

It belongs to the Cytosolic-abundant heat soluble protein (CAHS) family.

The protein localises to the cytoplasm. Functionally, CAHS proteins are cytosolic heat soluble proteins that seem to contribute to the anhydrobiosis in tardigrades, but their specific mechanisms are yet to be identified. It is possible that protection during anhydrobiosis might occur via the stabilization of vitrifying small molecules such as sugars, but not via the direct glass transition of CAHS proteins themselves. In Paramacrobiotus richtersi (Water bear), this protein is Cytosolic-abundant heat soluble protein 106094.